The chain runs to 287 residues: Glutamate racemase (287 aa).

Substrate contacts are provided by residues 32-33 (DS) and 64-65 (YG). Cys-96 serves as the catalytic Proton donor/acceptor. 97-98 (NT) contributes to the substrate binding site. Residue Cys-208 is the Proton donor/acceptor of the active site. 209-210 (TH) provides a ligand contact to substrate.

The protein belongs to the aspartate/glutamate racemases family.

It carries out the reaction L-glutamate = D-glutamate. The protein operates within cell wall biogenesis; peptidoglycan biosynthesis. Provides the (R)-glutamate required for cell wall biosynthesis. The sequence is that of Glutamate racemase from Yersinia enterocolitica serotype O:8 / biotype 1B (strain NCTC 13174 / 8081).